Consider the following 516-residue polypeptide: MRLHAFTLLSLLGLVPSFAAASLSGSVGPLTSASAKAAKKTCNVLDYGAKADKKTDLGPPLAAAFAACKSGGLVYIPAGNYAMSTWVKLANGKAWALQIDGVIYRTGTDGGNMIMIEHTSDFELYSSTSSGAMQGLGYELHAANNWSGPRLLRLWDVSDFSVHDLILVDSPSFHFSIDTCSNGEVYNMAIRGGNHGGLDGVDVWSTNIWIHDVEVTNKDECVTVKSPAKNILVENIYCNLSGGCGMGSLGADTDISDITYKNIYTWNSNQMMMIKSNGGSGTVSNVVLENFIGHGNAYSLDIDSYWSSMSAVSGDGVELSNITIKNWKGTEANGAQRGPIKIICPDKVPCYNILIEDFAMWTETGSKQWYSCQSAYGSGFCLKSGSHHTSYAVTTTTVSSAPSGYSAAKMPLDLSTDFGSTQSIPIPTIPTSFYPGATPYSALMSKQSTKAAKARAVDMSVETPAAASRSEQVVQGASQETSQPAPESAGPVRSVPTGGNRPSRHRHGHHHFWIAA.

The signal sequence occupies residues Met1–Ala21. Residues Cys42 and Cys68 are joined by a disulfide bond. Asn145 is a glycosylation site (N-linked (GlcNAc...) asparagine). Asp219 (proton donor) is an active-site residue. Cys221 and Cys238 form a disulfide bridge. An N-linked (GlcNAc...) asparagine glycan is attached at Asn239. His294 is an active-site residue. Asn321 carries N-linked (GlcNAc...) asparagine glycosylation. Disulfide bonds link Cys344/Cys350 and Cys372/Cys381. Residues Glu462–Ala516 form a disordered region. Residues Arg469 to Ala485 are compositionally biased toward polar residues. Over residues Pro502–Ala516 the composition is skewed to basic residues.

Belongs to the glycosyl hydrolase 28 family.

The protein localises to the secreted. It catalyses the reaction Endohydrolysis of alpha-D-GalA-(1-&gt;2)-alpha-L-Rha glycosidic bond in the rhamnogalacturonan I backbone with initial inversion of anomeric configuration releasing oligosaccharides with beta-D-GalA at the reducing end.. Its function is as follows. Pectinolytic enzymes consist of four classes of enzymes: pectine lyase, polygalacturonase, pectin methylesterase and rhamnogalacturonase. Hydrolyzes alpha-D-galacturonopyranosyl-(1,2)-alpha-L-rhamnopyranosyl linkages in the backbone of the hairy regions of pectins. This chain is Probable rhamnogalacturonase B (rhgB), found in Neosartorya fischeri (strain ATCC 1020 / DSM 3700 / CBS 544.65 / FGSC A1164 / JCM 1740 / NRRL 181 / WB 181) (Aspergillus fischerianus).